Consider the following 720-residue polypeptide: Fatty acid CoA ligase Acsl3 (720 aa).

A helical; Signal-anchor for type III membrane protein membrane pass occupies residues 21–41 (ILLYFIHFLISLYTILTYIPF). Residues 42 to 720 (YFFSESRQEK…ADIERMYGRK (679 aa)) are Cytoplasmic-facing. Position 683 is a phosphoserine (S683).

The protein belongs to the ATP-dependent AMP-binding enzyme family. Requires Mg(2+) as cofactor.

The protein resides in the mitochondrion outer membrane. It localises to the peroxisome membrane. The protein localises to the microsome membrane. It is found in the endoplasmic reticulum membrane. The enzyme catalyses a long-chain fatty acid + ATP + CoA = a long-chain fatty acyl-CoA + AMP + diphosphate. The catalysed reaction is (5Z,8Z,11Z,14Z)-eicosatetraenoate + ATP + CoA = (5Z,8Z,11Z,14Z)-eicosatetraenoyl-CoA + AMP + diphosphate. It carries out the reaction (E)-hexadec-2-enoate + ATP + CoA = (2E)-hexadecenoyl-CoA + AMP + diphosphate. It catalyses the reaction 15-hydroxy-(5Z,8Z,11Z,13E)-eicosatetraenoate + ATP + CoA = 15-hydroxy-(5Z,8Z,11Z,13E)-eicosatetraenoyl-CoA + AMP + diphosphate. The enzyme catalyses 12-hydroxy-(5Z,8Z,10E,14Z)-eicosatetraenoate + ATP + CoA = 12-hydroxy-(5Z,8Z,10E,14Z)-eicosatetraenoyl-CoA + AMP + diphosphate. The catalysed reaction is 5-hydroxy-(6E,8Z,11Z,14Z)-eicosatetraenoate + ATP + CoA = 5-hydroxy-(6E,8Z,11Z,14Z)-eicosatetraenoyl-CoA + AMP + diphosphate. It carries out the reaction 14,15-epoxy-(5Z,8Z,11Z)-eicosatrienoate + ATP + CoA = 14,15-epoxy-(5Z,8Z,11Z)-eicosatrienoyl-CoA + AMP + diphosphate. It catalyses the reaction 11,12-epoxy-(5Z,8Z,14Z)-eicosatrienoate + ATP + CoA = 11,12-epoxy-(5Z,8Z,14Z)-eicosatrienoyl-CoA + AMP + diphosphate. The enzyme catalyses a medium-chain fatty acid + ATP + CoA = a medium-chain fatty acyl-CoA + AMP + diphosphate. The catalysed reaction is hexadecanoate + ATP + CoA = hexadecanoyl-CoA + AMP + diphosphate. It carries out the reaction tetradecanoate + ATP + CoA = tetradecanoyl-CoA + AMP + diphosphate. It catalyses the reaction dodecanoate + ATP + CoA = dodecanoyl-CoA + AMP + diphosphate. The enzyme catalyses octadecanoate + ATP + CoA = octadecanoyl-CoA + AMP + diphosphate. The catalysed reaction is eicosanoate + ATP + CoA = eicosanoyl-CoA + AMP + diphosphate. It carries out the reaction (9Z)-octadecenoate + ATP + CoA = (9Z)-octadecenoyl-CoA + AMP + diphosphate. It catalyses the reaction (9Z)-hexadecenoate + ATP + CoA = (9Z)-hexadecenoyl-CoA + AMP + diphosphate. The enzyme catalyses (9Z,12Z)-octadecadienoate + ATP + CoA = (9Z,12Z)-octadecadienoyl-CoA + AMP + diphosphate. The catalysed reaction is (9Z,12Z,15Z)-octadecatrienoate + ATP + CoA = (9Z,12Z,15Z)-octadecatrienoyl-CoA + AMP + diphosphate. It carries out the reaction (4Z,7Z,10Z,13Z,16Z,19Z)-docosahexaenoate + ATP + CoA = (4Z,7Z,10Z,13Z,16Z,19Z)-docosahexaenoyl-CoA + AMP + diphosphate. It catalyses the reaction (5Z,8Z,11Z,14Z,17Z)-eicosapentaenoate + ATP + CoA = (5Z,8Z,11Z,14Z,17Z)-eicosapentaenoyl-CoA + AMP + diphosphate. The enzyme catalyses a fatty acid + ATP + CoA = a fatty acyl-CoA + AMP + diphosphate. Acyl-CoA synthetases (ACSL) activates long-chain fatty acids for both synthesis of cellular lipids, and degradation via beta-oxidation. Required for the incorporation of fatty acids into phosphatidylcholine, the major phospholipid located on the surface of VLDL (very low density lipoproteins). Has mainly an anabolic role in energy metabolism. Mediates hepatic lipogenesis. Preferentially uses myristate, laurate, arachidonate and eicosapentaenoate as substrates. Both isoforms exhibit the same level of activity. In Homo sapiens (Human), this protein is Fatty acid CoA ligase Acsl3.